We begin with the raw amino-acid sequence, 405 residues long: Probable tRNA sulfurtransferase (405 aa).

The 106-residue stretch at 60 to 165 (DAVINRLKKV…SNGIFLTSEV (106 aa)) folds into the THUMP domain. ATP contacts are provided by residues 183–184 (ML), 208–209 (HF), R265, G287, and Q296.

It belongs to the ThiI family.

It localises to the cytoplasm. The enzyme catalyses [ThiI sulfur-carrier protein]-S-sulfanyl-L-cysteine + a uridine in tRNA + 2 reduced [2Fe-2S]-[ferredoxin] + ATP + H(+) = [ThiI sulfur-carrier protein]-L-cysteine + a 4-thiouridine in tRNA + 2 oxidized [2Fe-2S]-[ferredoxin] + AMP + diphosphate. It catalyses the reaction [ThiS sulfur-carrier protein]-C-terminal Gly-Gly-AMP + S-sulfanyl-L-cysteinyl-[cysteine desulfurase] + AH2 = [ThiS sulfur-carrier protein]-C-terminal-Gly-aminoethanethioate + L-cysteinyl-[cysteine desulfurase] + A + AMP + 2 H(+). Its pathway is cofactor biosynthesis; thiamine diphosphate biosynthesis. Functionally, catalyzes the ATP-dependent transfer of a sulfur to tRNA to produce 4-thiouridine in position 8 of tRNAs, which functions as a near-UV photosensor. Also catalyzes the transfer of sulfur to the sulfur carrier protein ThiS, forming ThiS-thiocarboxylate. This is a step in the synthesis of thiazole, in the thiamine biosynthesis pathway. The sulfur is donated as persulfide by IscS. The polypeptide is Probable tRNA sulfurtransferase (Pediococcus pentosaceus (strain ATCC 25745 / CCUG 21536 / LMG 10740 / 183-1w)).